Reading from the N-terminus, the 65-residue chain is uncharacterized protein (65 aa).

This is an uncharacterized protein from Treponema pallidum (strain Nichols).